The chain runs to 205 residues: Putative 3-methyladenine DNA glycosylase (205 aa).

It belongs to the DNA glycosylase MPG family.

The sequence is that of Putative 3-methyladenine DNA glycosylase from Bacillus cereus (strain ZK / E33L).